We begin with the raw amino-acid sequence, 534 residues long: Benzaldehyde dehydrogenase, mitochondrial (534 aa).

A mitochondrion-targeting transit peptide spans 1–29 (MAAHRFSSLLSRSVPLLSRGGKQSYLGRG). Residues 199 to 202 (IPWN), 225 to 228 (KTAE), 258 to 259 (GP), 278 to 279 (GS), and 301 to 303 (ELG) contribute to the NAD(+) site. Catalysis depends on E301, which acts as the Proton acceptor. C335 (nucleophile) is an active-site residue. Residues 381 to 385 (DQFEK) and 432 to 434 (EIF) contribute to the NAD(+) site.

It belongs to the aldehyde dehydrogenase family. In terms of assembly, homotetramer. As to expression, expressed predominantly in the upper and lower flower petal lobes, and, at low levels, in flower tubes, pistils, stamens and sepals.

The protein resides in the mitochondrion. It carries out the reaction an aldehyde + NAD(+) + H2O = a carboxylate + NADH + 2 H(+). The catalysed reaction is acetaldehyde + NAD(+) + H2O = acetate + NADH + 2 H(+). It catalyses the reaction benzaldehyde + NAD(+) + H2O = benzoate + NADH + 2 H(+). The enzyme catalyses 2-phenylacetaldehyde + NAD(+) + H2O = 2-phenylacetate + NADH + 2 H(+). It participates in aromatic compound metabolism. Inhibited by disulfiram. In terms of biological role, component of the floral volatile benzenoid/phenylpropanoid (FVBP) biosynthetic pathway. Catalyzes the oxidation of benzaldehyde to benzoic acid (BA). Capable of oxidizing a broad spectrum of aliphatic aldehydes; increased carbon chain length results in a decrease in its efficiency. This is Benzaldehyde dehydrogenase, mitochondrial from Antirrhinum majus (Garden snapdragon).